Consider the following 207-residue polypeptide: MPSIAVYNMNRQQVGELQLADDVFNADVKEHLMHLALRIQLANRRAGTVKTKTRSEVAGSGKKPFKQKGTGNARQGCVRAPQYPGGGVAFGPQPKEYHLSMNKKARKSAICSALSLQCKNNRITVMDKLDFSSISTKAFVDFMKRFEIERSLIITDDFSNNLQLSCRNVPHVKLLKHDALNIHDILKYKNIIFTQGAVQSVEGVLNK.

A disordered region spans residues Lys-50–Gln-75.

The protein belongs to the universal ribosomal protein uL4 family. Part of the 50S ribosomal subunit.

In terms of biological role, one of the primary rRNA binding proteins, this protein initially binds near the 5'-end of the 23S rRNA. It is important during the early stages of 50S assembly. It makes multiple contacts with different domains of the 23S rRNA in the assembled 50S subunit and ribosome. Its function is as follows. Forms part of the polypeptide exit tunnel. The protein is Large ribosomal subunit protein uL4 of Pelobacter propionicus (strain DSM 2379 / NBRC 103807 / OttBd1).